A 306-amino-acid polypeptide reads, in one-letter code: tRNA dimethylallyltransferase (306 aa).

Residue alanine 11–threonine 18 participates in ATP binding. Position 13–18 (threonine 13–threonine 18) interacts with substrate.

It belongs to the IPP transferase family. In terms of assembly, monomer. Mg(2+) serves as cofactor.

It carries out the reaction adenosine(37) in tRNA + dimethylallyl diphosphate = N(6)-dimethylallyladenosine(37) in tRNA + diphosphate. Its function is as follows. Catalyzes the transfer of a dimethylallyl group onto the adenine at position 37 in tRNAs that read codons beginning with uridine, leading to the formation of N6-(dimethylallyl)adenosine (i(6)A). This is tRNA dimethylallyltransferase from Deinococcus radiodurans (strain ATCC 13939 / DSM 20539 / JCM 16871 / CCUG 27074 / LMG 4051 / NBRC 15346 / NCIMB 9279 / VKM B-1422 / R1).